The primary structure comprises 329 residues: 36 kDa antigen (329 aa).

A helical membrane pass occupies residues 11–31; the sequence is AILTGGGALLLGLIVLFYLAY.

Belongs to the membrane fusion protein (MFP) (TC 8.A.1) family.

The protein localises to the membrane. This chain is 36 kDa antigen, found in Helicobacter pylori (strain J99 / ATCC 700824) (Campylobacter pylori J99).